We begin with the raw amino-acid sequence, 333 residues long: NAC domain-containing protein 26 (333 aa).

Positions 14-173 constitute an NAC domain; that stretch reads LPPGFRFHPT…DWAVCRIFHK (160 aa). The DNA-binding element occupies 114–179; that stretch reads IGMKKTLVFY…IFHKSSGIKK (66 aa). The disordered stretch occupies residues 143–162; that stretch reads ADASPPQPPPPPSSAEPPRQ. Over residues 147-157 the composition is skewed to pro residues; it reads PPQPPPPPSSA.

As to quaternary structure, forms homodimers. Forms heterodimers with NAC20. Forms heterodimers with NAC23. In terms of tissue distribution, expressed in developing seeds.

It is found in the nucleus. Transcription factor that acts redundantly with NAC20 to regulate the expression of genes involved in the biosynthesis of starch and storage proteins in grain. Directly binds to the promoters of starch synthase 1 (SS1), pullulanase (PUL), glutelin A1 (GLUA1), glutelins B4 and B5 (GLUB4 and GLUB5), alpha-globulin and 16 kDa prolamin, and activates their expression. Possesses transactivation activity in yeast. The polypeptide is NAC domain-containing protein 26 (Oryza sativa subsp. indica (Rice)).